We begin with the raw amino-acid sequence, 717 residues long: Serologically defined colon cancer antigen 8 homolog (717 aa).

Phosphoserine is present on residues S4 and S28. A disordered region spans residues Q84–M115. 4 coiled-coil regions span residues I129 to R168, D221 to S278, E352 to Y590, and R622 to M712. The segment at T216–C717 is sufficient for homodimerization.

Homodimer. Interacts with OFD1; the interaction is direct. Interacts with FAM161A. Interacts with RABEP2, ERC1 and CEP131. In terms of tissue distribution, expressed in liver, kidney, spleen, brain, heart and muscle. Expressed in photoreceptor cells of the retina.

The protein resides in the cytoplasm. Its subcellular location is the cytoskeleton. The protein localises to the microtubule organizing center. It is found in the centrosome. It localises to the centriole. The protein resides in the cilium basal body. Its subcellular location is the cell junction. In terms of biological role, plays a role in the establishment of cell polarity and epithelial lumen formation. Also plays an essential role in ciliogenesis and subsequent Hedgehog signaling pathway that requires the presence of intact primary cilia for pathway activation. Mechanistically, interacts with and mediates RABEP2 centrosomal localization which is critical for ciliogenesis. This is Serologically defined colon cancer antigen 8 homolog (Sdccag8) from Mus musculus (Mouse).